Consider the following 266-residue polypeptide: uncharacterized protein (266 aa).

8 consecutive transmembrane segments (helical) span residues 9-29 (IAALLAVLSISMVLGIDLFIF), 37-57 (TMPHLGVGVLVAQLISLLVFY), 69-89 (LIKVNMTFAIYWAVWLLISLL), 123-143 (FLLMAALIAGLGCLSYLMIFT), 153-173 (YNPFAPILSGVILANLVLVIA), 184-204 (LPLAMIILLALNALAMFLFLL), 216-236 (SVFAYIIYFVCHFVIAAILIL), and 246-266 (TNSLFILLFIAVCLPLWMVFV).

Its subcellular location is the cell membrane. This is an uncharacterized protein from Haemophilus influenzae (strain ATCC 51907 / DSM 11121 / KW20 / Rd).